A 290-amino-acid polypeptide reads, in one-letter code: MKLLTASVTPFLPNYDIDFLSVEKLLHSQEKEGNGVVLLGSTGESLALTVQEKEKLVAYACSLDLKIPIIVGVPGTSLHEASAWVSLCQSYPVDGFLITSPIYTKPGIQGQILWFESILNITNKPAILYNIPSRAGSPIYLETVRALSGHPFFYGIKDSGGSIDRCREYTQVCPNLIIYCGDDGLWPQMHQCGARGLISVLSNSWPKEAHNYVEDPFNKNNSLLWCELVSWINQTTNPISIKAMLAYKQDIAYDILRLPLSIKDLQNKKVLPVLVEKMSQWSQICECVFT.

T42 contributes to the pyruvate binding site. Catalysis depends on Y129, which acts as the Proton donor/acceptor. K157 (schiff-base intermediate with substrate) is an active-site residue. I198 lines the pyruvate pocket.

Belongs to the DapA family. Homotetramer; dimer of dimers.

It is found in the cytoplasm. The catalysed reaction is L-aspartate 4-semialdehyde + pyruvate = (2S,4S)-4-hydroxy-2,3,4,5-tetrahydrodipicolinate + H2O + H(+). The protein operates within amino-acid biosynthesis; L-lysine biosynthesis via DAP pathway; (S)-tetrahydrodipicolinate from L-aspartate: step 3/4. Catalyzes the condensation of (S)-aspartate-beta-semialdehyde [(S)-ASA] and pyruvate to 4-hydroxy-tetrahydrodipicolinate (HTPA). This chain is 4-hydroxy-tetrahydrodipicolinate synthase, found in Chlamydia felis (strain Fe/C-56) (Chlamydophila felis).